We begin with the raw amino-acid sequence, 307 residues long: MVNTHVNLPGLDLKNPVMPASGTFGFGDVPAAQKFDLNDLGAMVIKTTTPHATTGNPQPQIAILEDGVLNSVGLTNPGVDQVISEKLTKLRHQYIDLPIMASVGGDSEDDYVEVAKKLSASGLVNALEINVSCPNVAQGGMSFGVHAGVVEELTKKIKMAVALPIYVKLTPNVTDIVEIAKAAESGGADGISMINTVLGMRIDVKTRKPLLGHNMGGLSGEAVKPIAIRMISQVRQVTQLPIIGMGGISTAQDVIEFILAGANAVAVGSAHFEDELAAKHIAENLPAELEKLGIEDINDLVGQVKFN.

Residues Ser-21 and 46–47 (KT) contribute to the FMN site. Residues Lys-46, 70–74 (NSVGL), and Asn-130 contribute to the substrate site. Residue Asn-130 coordinates FMN. The active-site Nucleophile is Cys-133. FMN-binding residues include Lys-168 and Ile-194. 195–196 (NT) provides a ligand contact to substrate. FMN-binding positions include Gly-220, 246–247 (GG), and 268–269 (GS).

The protein belongs to the dihydroorotate dehydrogenase family. Type 1 subfamily. In terms of assembly, homodimer. FMN serves as cofactor.

The protein localises to the cytoplasm. The enzyme catalyses (S)-dihydroorotate + fumarate = orotate + succinate. It functions in the pathway pyrimidine metabolism; UMP biosynthesis via de novo pathway. Catalyzes the conversion of dihydroorotate to orotate with fumarate as the electron acceptor. This chain is Dihydroorotate dehydrogenase A (fumarate) (pyrD), found in Lactobacillus delbrueckii subsp. bulgaricus (strain ATCC BAA-365 / Lb-18).